The following is a 611-amino-acid chain: MIFFKKKHDKKLLLGIDLGTTYSLAATVREKSVILLLDKKKRYLLPSVVHYKKNKISVGWKALENITEDPTNTISSVKRLLGRSINFVKKKFPILPYLIEKDIHEGIFFRTNFGNITPIDVSSHILKKLKKRAVLLFNQEIDASVITVPAYFNDFQKKETKKAAVLSGINLIRLLNEPTAAAVAYGLQKLKKGIVLVYDLGGGTFDVSILNLNKGIFEVLATSGDSNLGGDDFDDALAKNIYKKSNLQNRCNDFFQTSLLQIAKSTKLKLTKYEKVEVHFFDWKGYITREEFNLIIIDFIKKTLFICSDLLEEINLSVEQIKEVIMVGGSTRIPLVHTEVSKFFKKDLLKSINPDQVVAIGAAMHVDMLFSSKNNTKNKVILLDVMPLSLGIEVMGGFVEKIIFRNTSLPISKTKEFTTYKDNQTSILIHIVQGERELVKDCISLSRFVLRDIKPQKAGLVRILVTFQVDTDGLIHVKILENYSSKEKKIIIDNNITLKNLNISQILKDSLKHSKDDYYFRVKEEKKIECVRTLEILNKSLKKHLKLISKKELKKIKYTQEKLQKSIQEDDYFSMKNNLQKLDEVSKNFFSLQLKNAIDCSSIKNILKENI.

Belongs to the heat shock protein 70 family.

In terms of biological role, chaperone involved in the maturation of iron-sulfur cluster-containing proteins. Has a low intrinsic ATPase activity which is markedly stimulated by HscB. Involved in the maturation of IscU. This is Chaperone protein HscA from Buchnera aphidicola subsp. Acyrthosiphon pisum (strain 5A).